Consider the following 742-residue polypeptide: NAD(P)H-quinone oxidoreductase subunit 5, chloroplastic (742 aa).

A run of 16 helical transmembrane segments spans residues 9–29 (WIIPLLPLPVTMSIGFGLLLI), 40–60 (WAFPSVLLLSIGLIFSANLAF), 89–109 (IDPLTSVMLILITTVGIMVLI), 125–145 (FAYMSFFNASMLGLVTSSNLI), 147–167 (IYIFWELVGMCSYLLIGFWFT), 185–205 (GDFGLLLGILGFYWITGSFEF), 228–248 (AFLLFLGAIAKSAQFPLHVWL), 256–276 (TPISALIHAATMVAAGIFLVA), 288–308 (IMNIISLIGVITLLLGATLAL), 325–345 (LGYIMLALGLGSYRAALFHLI), 352–372 (ALLFLGSGSIIHSMEPLVGYS), 394–414 (TTFLLGTLSLCGIPPLACFWS), 423–443 (WLYSPSFAVIAYFTAGLTAFY), 544–564 (YPLLILVVFTLFVGFIGIPLV), 599–619 (FFINASFSVSIATGGIFLAFI), and 720–740 (ISFYLFFYLFFILIFVYFLFL).

The protein belongs to the complex I subunit 5 family. In terms of assembly, NDH is composed of at least 16 different subunits, 5 of which are encoded in the nucleus.

The protein localises to the plastid. The protein resides in the chloroplast thylakoid membrane. The catalysed reaction is a plastoquinone + NADH + (n+1) H(+)(in) = a plastoquinol + NAD(+) + n H(+)(out). It catalyses the reaction a plastoquinone + NADPH + (n+1) H(+)(in) = a plastoquinol + NADP(+) + n H(+)(out). Its function is as follows. NDH shuttles electrons from NAD(P)H:plastoquinone, via FMN and iron-sulfur (Fe-S) centers, to quinones in the photosynthetic chain and possibly in a chloroplast respiratory chain. The immediate electron acceptor for the enzyme in this species is believed to be plastoquinone. Couples the redox reaction to proton translocation, and thus conserves the redox energy in a proton gradient. The polypeptide is NAD(P)H-quinone oxidoreductase subunit 5, chloroplastic (ndhF) (Lemna minor (Common duckweed)).